Consider the following 397-residue polypeptide: Succinate--CoA ligase [ADP-forming] subunit beta (397 aa).

One can recognise an ATP-grasp domain in the interval 9–254; it reads KALLKGYGAP…ETEEDAKEIE (246 aa). ATP contacts are provided by residues Lys46, 53 to 55, Glu109, Ala112, and Glu117; that span reads GRG. Residues Asn209 and Asp223 each contribute to the Mg(2+) site. Substrate-binding positions include Asn274 and 331 to 333; that span reads GIM.

The protein belongs to the succinate/malate CoA ligase beta subunit family. In terms of assembly, heterotetramer of two alpha and two beta subunits. Requires Mg(2+) as cofactor.

It catalyses the reaction succinate + ATP + CoA = succinyl-CoA + ADP + phosphate. The catalysed reaction is GTP + succinate + CoA = succinyl-CoA + GDP + phosphate. It functions in the pathway carbohydrate metabolism; tricarboxylic acid cycle; succinate from succinyl-CoA (ligase route): step 1/1. In terms of biological role, succinyl-CoA synthetase functions in the citric acid cycle (TCA), coupling the hydrolysis of succinyl-CoA to the synthesis of either ATP or GTP and thus represents the only step of substrate-level phosphorylation in the TCA. The beta subunit provides nucleotide specificity of the enzyme and binds the substrate succinate, while the binding sites for coenzyme A and phosphate are found in the alpha subunit. The protein is Succinate--CoA ligase [ADP-forming] subunit beta of Agrobacterium fabrum (strain C58 / ATCC 33970) (Agrobacterium tumefaciens (strain C58)).